Reading from the N-terminus, the 57-residue chain is Large ribosomal subunit protein uL30 (57 aa).

This sequence belongs to the universal ribosomal protein uL30 family. As to quaternary structure, part of the 50S ribosomal subunit.

In Clostridium acetobutylicum (strain ATCC 824 / DSM 792 / JCM 1419 / IAM 19013 / LMG 5710 / NBRC 13948 / NRRL B-527 / VKM B-1787 / 2291 / W), this protein is Large ribosomal subunit protein uL30.